Reading from the N-terminus, the 172-residue chain is Large ribosomal subunit protein uL5 (172 aa).

It belongs to the universal ribosomal protein uL5 family. As to quaternary structure, component of the large ribosomal subunit.

It is found in the nucleus. It localises to the cytoplasm. Component of the ribosome, a large ribonucleoprotein complex responsible for the synthesis of proteins in the cell. The small ribosomal subunit (SSU) binds messenger RNAs (mRNAs) and translates the encoded message by selecting cognate aminoacyl-transfer RNA (tRNA) molecules. The large subunit (LSU) contains the ribosomal catalytic site termed the peptidyl transferase center (PTC), which catalyzes the formation of peptide bonds, thereby polymerizing the amino acids delivered by tRNAs into a polypeptide chain. The nascent polypeptides leave the ribosome through a tunnel in the LSU and interact with protein factors that function in enzymatic processing, targeting, and the membrane insertion of nascent chains at the exit of the ribosomal tunnel. The protein is Large ribosomal subunit protein uL5 (RPL11) of Tetrahymena thermophila.